A 133-amino-acid chain; its full sequence is Small ribosomal subunit protein uS8 (133 aa).

The protein belongs to the universal ribosomal protein uS8 family. Part of the 30S ribosomal subunit.

One of the primary rRNA binding proteins, it binds directly to 16S rRNA central domain where it helps coordinate assembly of the platform of the 30S subunit. The chain is Small ribosomal subunit protein uS8 from Saccharolobus islandicus (strain L.S.2.15 / Lassen #1) (Sulfolobus islandicus).